Reading from the N-terminus, the 126-residue chain is Holo-[acyl-carrier-protein] synthase (126 aa).

D9 and E58 together coordinate Mg(2+).

This sequence belongs to the P-Pant transferase superfamily. AcpS family. Mg(2+) is required as a cofactor.

It localises to the cytoplasm. It catalyses the reaction apo-[ACP] + CoA = holo-[ACP] + adenosine 3',5'-bisphosphate + H(+). Its function is as follows. Transfers the 4'-phosphopantetheine moiety from coenzyme A to a Ser of acyl-carrier-protein. The chain is Holo-[acyl-carrier-protein] synthase from Escherichia coli O17:K52:H18 (strain UMN026 / ExPEC).